Reading from the N-terminus, the 480-residue chain is Gasdermin-C3 (480 aa).

A triggers pyroptosis region spans residues 1 to 226 (MGYSFDRASK…TCVILPSATK (226 aa)).

The protein belongs to the gasdermin family. Homooligomer; homooligomeric ring-shaped pore complex containing 27-28 subunits when inserted in the membrane. In terms of processing, cleavage by CASP8 relieves autoinhibition by releasing the N-terminal moiety (Gasdermin-C3, N-terminal) that initiates pyroptosis. Palmitoylated.

Its subcellular location is the cytoplasm. The protein localises to the cytosol. It is found in the cell membrane. The full-length protein before cleavage is inactive: intramolecular interactions between N- and C-terminal domains mediate autoinhibition in the absence of activation signal. The intrinsic pyroptosis-inducing activity is carried by the released N-terminal moiety (Gasdermin-C3, N-terminal) following cleavage by caspase CASP8. This form constitutes the precursor of the pore-forming protein: upon cleavage, the released N-terminal moiety (Gasdermin-C3, N-terminal) binds to membranes and forms pores, triggering pyroptosis. Its function is as follows. Pore-forming protein that causes membrane permeabilization and pyroptosis. Produced by the cleavage of gasdermin-C3 by caspase CASP8 in response to death signals. After cleavage, moves to the plasma membrane where it strongly binds to membrane inner leaflet lipids. Homooligomerizes within the membrane and forms pores of 10-15 nanometers (nm) of inner diameter, triggering pyroptosis. This Mus musculus (Mouse) protein is Gasdermin-C3.